A 513-amino-acid chain; its full sequence is ATP synthase subunit alpha (513 aa).

ATP is bound at residue 171–178; sequence GDRQIGKT.

This sequence belongs to the ATPase alpha/beta chains family. F-type ATPases have 2 components, CF(1) - the catalytic core - and CF(0) - the membrane proton channel. CF(1) has five subunits: alpha(3), beta(3), gamma(1), delta(1), epsilon(1). CF(0) has three main subunits: a(1), b(2) and c(9-12). The alpha and beta chains form an alternating ring which encloses part of the gamma chain. CF(1) is attached to CF(0) by a central stalk formed by the gamma and epsilon chains, while a peripheral stalk is formed by the delta and b chains.

It localises to the cell membrane. It catalyses the reaction ATP + H2O + 4 H(+)(in) = ADP + phosphate + 5 H(+)(out). In terms of biological role, produces ATP from ADP in the presence of a proton gradient across the membrane. The alpha chain is a regulatory subunit. The polypeptide is ATP synthase subunit alpha (Wolbachia pipientis subsp. Culex pipiens (strain wPip)).